The sequence spans 93 residues: UPF0358 protein ABC2396 (93 aa).

This sequence belongs to the UPF0358 family.

This is UPF0358 protein ABC2396 from Shouchella clausii (strain KSM-K16) (Alkalihalobacillus clausii).